The chain runs to 363 residues: 3-isopropylmalate dehydrogenase (363 aa).

79–92 is an NAD(+) binding site; that stretch reads GPKWEHLPPNDQPE. Substrate contacts are provided by Arg-100, Arg-110, Arg-139, and Asp-228. Mg(2+)-binding residues include Asp-228, Asp-252, and Asp-256. Position 286–298 (286–298) interacts with NAD(+); that stretch reads GSAPDIAGKNIAN.

Belongs to the isocitrate and isopropylmalate dehydrogenases family. LeuB type 1 subfamily. In terms of assembly, homodimer. Mg(2+) serves as cofactor. Mn(2+) is required as a cofactor.

It is found in the cytoplasm. The enzyme catalyses (2R,3S)-3-isopropylmalate + NAD(+) = 4-methyl-2-oxopentanoate + CO2 + NADH. It participates in amino-acid biosynthesis; L-leucine biosynthesis; L-leucine from 3-methyl-2-oxobutanoate: step 3/4. In terms of biological role, catalyzes the oxidation of 3-carboxy-2-hydroxy-4-methylpentanoate (3-isopropylmalate) to 3-carboxy-4-methyl-2-oxopentanoate. The product decarboxylates to 4-methyl-2 oxopentanoate. The protein is 3-isopropylmalate dehydrogenase of Vibrio vulnificus (strain CMCP6).